Consider the following 467-residue polypeptide: Pentatricopeptide repeat-containing protein At1g77170, mitochondrial (467 aa).

The N-terminal 30 residues, 1–30 (MFFSGLISKLHVHGTKRTNHFTIFHRLNHF), are a transit peptide targeting the mitochondrion. PPR repeat units follow at residues 81–115 (IAFL…TVLP), 116–150 (DRYS…GFVG), 151–181 (DEFC…NPER), 182–216 (KLGS…GLEP), 217–251 (DDFT…KTEE), 254–284 (DIMM…MRQR), 285–319 (NVVS…GVRP), 320–350 (NKIT…MKSE), and 356–386 (GLSH…MPMK). The tract at residues 391-466 (VWGCLMGGCE…IPAYSYASTT (76 aa)) is type E motif.

Belongs to the PPR family. PCMP-E subfamily.

It is found in the mitochondrion. This is Pentatricopeptide repeat-containing protein At1g77170, mitochondrial (PCMP-E21) from Arabidopsis thaliana (Mouse-ear cress).